Reading from the N-terminus, the 33-residue chain is U1-pseudomyrmecitoxin-Pt1 subunit LS2 (33 aa).

It belongs to the myrmexin family. As to quaternary structure, heterodimer composed of subunit LS2 and subunit SS1, heterodimer composed of subunit LS2 and SS2, and heterodimer composed of subunit LS2 and SS3; disulfide-linked. In terms of tissue distribution, expressed by the venom gland.

It is found in the secreted. In terms of biological role, this heterodimer may have anti-inflammatory properties, since the myrmexin complex (composed of 6 SS-LS heterodimers) inhibits carrageenin-induced edema in a dose-dependent manner (after subcutaneous injection into rats). The protein is U1-pseudomyrmecitoxin-Pt1 subunit LS2 of Pseudomyrmex triplarinus (Ant).